An 817-amino-acid polypeptide reads, in one-letter code: DNA gyrase subunit A (817 aa).

Residues 39-505 form the Topo IIA-type catalytic domain; it reads LPDARDGLKP…AVEDVSIEDL (467 aa). Y127 functions as the O-(5'-phospho-DNA)-tyrosine intermediate in the catalytic mechanism. A GyrA-box motif is present at residues 532 to 538; it reads QGRGGKG.

The protein belongs to the type II topoisomerase GyrA/ParC subunit family. In terms of assembly, heterotetramer, composed of two GyrA and two GyrB chains. In the heterotetramer, GyrA contains the active site tyrosine that forms a transient covalent intermediate with DNA, while GyrB binds cofactors and catalyzes ATP hydrolysis.

It is found in the cytoplasm. It catalyses the reaction ATP-dependent breakage, passage and rejoining of double-stranded DNA.. A type II topoisomerase that negatively supercoils closed circular double-stranded (ds) DNA in an ATP-dependent manner to modulate DNA topology and maintain chromosomes in an underwound state. Negative supercoiling favors strand separation, and DNA replication, transcription, recombination and repair, all of which involve strand separation. Also able to catalyze the interconversion of other topological isomers of dsDNA rings, including catenanes and knotted rings. Type II topoisomerases break and join 2 DNA strands simultaneously in an ATP-dependent manner. The sequence is that of DNA gyrase subunit A from Aminobacterium colombiense (strain DSM 12261 / ALA-1).